Reading from the N-terminus, the 763-residue chain is Xaa-Pro dipeptidyl-peptidase (763 aa).

Catalysis depends on charge relay system residues serine 348, aspartate 468, and histidine 498.

The protein belongs to the peptidase S15 family. As to quaternary structure, homodimer.

It is found in the cytoplasm. It carries out the reaction Hydrolyzes Xaa-Pro-|- bonds to release unblocked, N-terminal dipeptides from substrates including Ala-Pro-|-p-nitroanilide and (sequentially) Tyr-Pro-|-Phe-Pro-|-Gly-Pro-|-Ile.. Functionally, removes N-terminal dipeptides sequentially from polypeptides having unsubstituted N-termini provided that the penultimate residue is proline. This chain is Xaa-Pro dipeptidyl-peptidase, found in Lactococcus lactis subsp. cremoris (strain SK11).